The chain runs to 444 residues: Pentatricopeptide repeat-containing protein At4g35850, mitochondrial (444 aa).

The N-terminal 25 residues, 1-25, are a transit peptide targeting the mitochondrion; it reads MKFLMQSISGRNRSLVRALVSRRYF. PPR repeat units follow at residues 40–74, 75–109, 110–144, 145–179, 255–289, and 290–325; these read DLSE…GVQP, TADI…GIAP, DVNL…DVKP, NGQT…GVGL, NLTV…GKDT, and DTYC…KIPA.

Belongs to the PPR family. P subfamily.

It is found in the mitochondrion. The protein is Pentatricopeptide repeat-containing protein At4g35850, mitochondrial of Arabidopsis thaliana (Mouse-ear cress).